A 409-amino-acid chain; its full sequence is Nucleoprotein (409 aa).

Disordered stretches follow at residues 1 to 32, 46 to 69, 120 to 193, and 238 to 259; these read MASGKATGKTDAPAPVIKLGGPKPPKVGSSGN, SPPLKFEGSGVPDNENLKTSQQHG, GADT…SGAE, and VDQVFGPRTKGKEGNFGDDKMN. The segment covering 15-31 has biased composition (low complexity); that stretch reads PVIKLGGPKPPKVGSSG. The tract at residues 29–160 is RNA-binding; the sequence is SSGNASWFQA…GNFRWDFIPL (132 aa). The 126-residue stretch at 31-156 folds into the CoV N NTD domain; sequence GNASWFQAIK…GGPDGNFRWD (126 aa). Residues 162-179 are compositionally biased toward low complexity; that stretch reads RGRSGKSTAASSAASSRA. Basic and acidic residues-rich tracts occupy residues 180–192 and 247–259; these read PSREGSRGRRSGA and KGKEGNFGDDKMN. Residue serine 190 is modified to Phosphoserine; by host. The region spanning 215 to 331 is the CoV N CTD domain; the sequence is TKAKADEMAH…QCVDGVGTRP (117 aa). A dimerization region spans residues 226-333; the sequence is RYCKRTIPPG…VDGVGTRPKD (108 aa). An intrachain disulfide couples cysteine 320 to cysteine 323. Positions 327-409 are disordered; that stretch reads VGTRPKDDEP…GDSALGENEL (83 aa). A compositionally biased stretch (low complexity) spans 341-354; it reads RSSSRPATRTSSPA. Over residues 358–367 the composition is skewed to basic residues; the sequence is PRPKKEKKTK. The segment covering 368-384 has biased composition (basic and acidic residues); it reads KQDDEVDKALTSDEERN. Threonine 378 is modified (phosphothreonine; by host). Serine 379 carries the phosphoserine; by host modification.

This sequence belongs to the gammacoronavirus nucleocapsid protein family. Homooligomer. Both monomeric and oligomeric forms interact with RNA. Interacts with protein M. Interacts with NSP3; this interaction serves to tether the genome to the newly translated replicase-transcriptase complex at a very early stage of infection. In terms of processing, ADP-ribosylated. The ADP-ribosylation is retained in the virion during infection. Phosphorylated on serine and threonine residues.

Its subcellular location is the virion. The protein resides in the host endoplasmic reticulum-Golgi intermediate compartment. It localises to the host Golgi apparatus. Functionally, packages the positive strand viral genome RNA into a helical ribonucleocapsid (RNP) and plays a fundamental role during virion assembly through its interactions with the viral genome and membrane protein M. Plays an important role in enhancing the efficiency of subgenomic viral RNA transcription as well as viral replication. This is Nucleoprotein from Gallus gallus (Chicken).